A 524-amino-acid chain; its full sequence is Phosphoenolpyruvate carboxykinase (ATP) (524 aa).

Substrate contacts are provided by R52, Y188, and K194. ATP-binding positions include K194, H213, and 229–237 (GLSGTGKTT). Mn(2+) is bound by residues K194 and H213. Residue D250 participates in Mn(2+) binding. ATP-binding residues include E278, R314, and T439. Residue R314 coordinates substrate.

Belongs to the phosphoenolpyruvate carboxykinase (ATP) family. Mn(2+) serves as cofactor.

Its subcellular location is the cytoplasm. It catalyses the reaction oxaloacetate + ATP = phosphoenolpyruvate + ADP + CO2. It participates in carbohydrate biosynthesis; gluconeogenesis. Its function is as follows. Involved in the gluconeogenesis. Catalyzes the conversion of oxaloacetate (OAA) to phosphoenolpyruvate (PEP) through direct phosphoryl transfer between the nucleoside triphosphate and OAA. The sequence is that of Phosphoenolpyruvate carboxykinase (ATP) from Campylobacter jejuni subsp. jejuni serotype O:2 (strain ATCC 700819 / NCTC 11168).